A 344-amino-acid polypeptide reads, in one-letter code: MVLGLAQYGVIDLHLHLDGSLSPAWMIEWAKKQAVNLPASTAEALTAYVSVPQDCSDLNEYLRCFDLPLSLLQTPEALSSAVTDLIQRLDQDGLVYAEIRFAPQLHTQRSMSQEDAVKAALRGLQAGLASTSLFKANLILCCMRAADNRSANLETICLAKQYLTKYEAGVVAIDLAGAEGLFATQHFQQEFDFANQRGVPFTIHAGEAAGPESVQQALDFGATRIGHGIRAIESETVMKQLIDKRTPLEMCPCSNLQTKTVAQLADYPLRTFLMRGVVATLNTDNMTVSQTCIQQEYRLLAEQYQLSISEAKQLLLNSIAAAFLSNEDKKALLAHIQQRYPQLI.

Zn(2+) contacts are provided by histidine 14 and histidine 16. Residues histidine 16, aspartate 18, and glycine 177 each contribute to the substrate site. Histidine 204 contributes to the Zn(2+) binding site. Glutamate 207 functions as the Proton donor in the catalytic mechanism. Position 284 (aspartate 284) interacts with Zn(2+).

The protein belongs to the metallo-dependent hydrolases superfamily. Adenosine and AMP deaminases family. Adenosine deaminase subfamily. The cofactor is Zn(2+).

The catalysed reaction is adenosine + H2O + H(+) = inosine + NH4(+). It carries out the reaction 2'-deoxyadenosine + H2O + H(+) = 2'-deoxyinosine + NH4(+). Functionally, catalyzes the hydrolytic deamination of adenosine and 2-deoxyadenosine. This Haemophilus ducreyi (strain 35000HP / ATCC 700724) protein is Adenosine deaminase.